Reading from the N-terminus, the 100-residue chain is Aspartyl/glutamyl-tRNA(Asn/Gln) amidotransferase subunit C (100 aa).

Belongs to the GatC family. In terms of assembly, heterotrimer of A, B and C subunits.

The catalysed reaction is L-glutamyl-tRNA(Gln) + L-glutamine + ATP + H2O = L-glutaminyl-tRNA(Gln) + L-glutamate + ADP + phosphate + H(+). It carries out the reaction L-aspartyl-tRNA(Asn) + L-glutamine + ATP + H2O = L-asparaginyl-tRNA(Asn) + L-glutamate + ADP + phosphate + 2 H(+). In terms of biological role, allows the formation of correctly charged Asn-tRNA(Asn) or Gln-tRNA(Gln) through the transamidation of misacylated Asp-tRNA(Asn) or Glu-tRNA(Gln) in organisms which lack either or both of asparaginyl-tRNA or glutaminyl-tRNA synthetases. The reaction takes place in the presence of glutamine and ATP through an activated phospho-Asp-tRNA(Asn) or phospho-Glu-tRNA(Gln). In Rickettsia canadensis (strain McKiel), this protein is Aspartyl/glutamyl-tRNA(Asn/Gln) amidotransferase subunit C.